The primary structure comprises 357 residues: sn-glycerol-3-phosphate import ATP-binding protein UgpC (357 aa).

Residues 4–235 (LKLQAVTKSY…PASLFVASFI (232 aa)) form the ABC transporter domain. 37–44 (GPSGCGKS) provides a ligand contact to ATP.

This sequence belongs to the ABC transporter superfamily. sn-glycerol-3-phosphate importer (TC 3.A.1.1.3) family. The complex is composed of two ATP-binding proteins (UgpC), two transmembrane proteins (UgpA and UgpE) and a solute-binding protein (UgpB).

It is found in the cell inner membrane. It carries out the reaction sn-glycerol 3-phosphate(out) + ATP + H2O = sn-glycerol 3-phosphate(in) + ADP + phosphate + H(+). Its function is as follows. Part of the ABC transporter complex UgpBAEC involved in sn-glycerol-3-phosphate (G3P) import. Responsible for energy coupling to the transport system. The chain is sn-glycerol-3-phosphate import ATP-binding protein UgpC from Pectobacterium atrosepticum (strain SCRI 1043 / ATCC BAA-672) (Erwinia carotovora subsp. atroseptica).